The sequence spans 483 residues: tRNA sulfurtransferase (483 aa).

The THUMP domain maps to 62–166 (PEICDALTRI…QDKLILVKAR (105 aa)). ATP is bound by residues 184–185 (LI), Lys266, Gly288, and Gln297. Cysteines 345 and 457 form a disulfide. In terms of domain architecture, Rhodanese spans 405 to 483 (LADTDVLLDI…GYTNVKVYRP (79 aa)). Cys457 acts as the Cysteine persulfide intermediate in catalysis.

It belongs to the ThiI family.

The protein localises to the cytoplasm. The catalysed reaction is [ThiI sulfur-carrier protein]-S-sulfanyl-L-cysteine + a uridine in tRNA + 2 reduced [2Fe-2S]-[ferredoxin] + ATP + H(+) = [ThiI sulfur-carrier protein]-L-cysteine + a 4-thiouridine in tRNA + 2 oxidized [2Fe-2S]-[ferredoxin] + AMP + diphosphate. It catalyses the reaction [ThiS sulfur-carrier protein]-C-terminal Gly-Gly-AMP + S-sulfanyl-L-cysteinyl-[cysteine desulfurase] + AH2 = [ThiS sulfur-carrier protein]-C-terminal-Gly-aminoethanethioate + L-cysteinyl-[cysteine desulfurase] + A + AMP + 2 H(+). The protein operates within cofactor biosynthesis; thiamine diphosphate biosynthesis. In terms of biological role, catalyzes the ATP-dependent transfer of a sulfur to tRNA to produce 4-thiouridine in position 8 of tRNAs, which functions as a near-UV photosensor. Also catalyzes the transfer of sulfur to the sulfur carrier protein ThiS, forming ThiS-thiocarboxylate. This is a step in the synthesis of thiazole, in the thiamine biosynthesis pathway. The sulfur is donated as persulfide by IscS. The protein is tRNA sulfurtransferase of Yersinia pseudotuberculosis serotype O:1b (strain IP 31758).